The primary structure comprises 291 residues: ATP synthase gamma chain (291 aa).

It belongs to the ATPase gamma chain family. F-type ATPases have 2 components, CF(1) - the catalytic core - and CF(0) - the membrane proton channel. CF(1) has five subunits: alpha(3), beta(3), gamma(1), delta(1), epsilon(1). CF(0) has three main subunits: a, b and c.

It localises to the cell inner membrane. Produces ATP from ADP in the presence of a proton gradient across the membrane. The gamma chain is believed to be important in regulating ATPase activity and the flow of protons through the CF(0) complex. The chain is ATP synthase gamma chain from Persephonella marina (strain DSM 14350 / EX-H1).